The following is a 427-amino-acid chain: Serine--tRNA ligase (427 aa).

230–232 (TSE) lines the L-serine pocket. Residues 260–262 (RRE) and Val-276 contribute to the ATP site. Glu-283 is a binding site for L-serine. An ATP-binding site is contributed by 347–350 (ELTS). Position 387 (Thr-387) interacts with L-serine.

This sequence belongs to the class-II aminoacyl-tRNA synthetase family. Type-1 seryl-tRNA synthetase subfamily. Homodimer. The tRNA molecule binds across the dimer.

Its subcellular location is the cytoplasm. The enzyme catalyses tRNA(Ser) + L-serine + ATP = L-seryl-tRNA(Ser) + AMP + diphosphate + H(+). It catalyses the reaction tRNA(Sec) + L-serine + ATP = L-seryl-tRNA(Sec) + AMP + diphosphate + H(+). The protein operates within aminoacyl-tRNA biosynthesis; selenocysteinyl-tRNA(Sec) biosynthesis; L-seryl-tRNA(Sec) from L-serine and tRNA(Sec): step 1/1. Functionally, catalyzes the attachment of serine to tRNA(Ser). Is also able to aminoacylate tRNA(Sec) with serine, to form the misacylated tRNA L-seryl-tRNA(Sec), which will be further converted into selenocysteinyl-tRNA(Sec). The sequence is that of Serine--tRNA ligase from Micrococcus luteus (strain ATCC 4698 / DSM 20030 / JCM 1464 / CCM 169 / CCUG 5858 / IAM 1056 / NBRC 3333 / NCIMB 9278 / NCTC 2665 / VKM Ac-2230) (Micrococcus lysodeikticus).